The following is a 613-amino-acid chain: Leucine-rich repeat and immunoglobulin-like domain-containing nogo receptor-interacting protein 1 (613 aa).

Positions 1 to 34 (MLAGEASMRSPILACWQPILLLMLGSILSGSATG) are cleaved as a signal peptide. 2 disulfides stabilise this stretch: C35-C41 and C39-C50. Residues 35–64 (CPPRCECSAQERAVLCHRKRFMVVPEGIPT) form the LRRNT domain. Over 35–554 (CPPRCECSAQ…FDIKTLIIAT (520 aa)) the chain is Extracellular. 11 LRR repeats span residues 65–86 (ETRQLDLGKNRIKTLNQDEFAN), 89–110 (HLEELELNENIISAIEPGAFNN), 113–134 (NLRTLGLRSNRLKLIPLGVFTG), 137–158 (NLTKLDISENKIVILLDYMFQD), 161–182 (NLKSLEVGDNDLVYISHRAFSG), 185–206 (SLEQLTLEKCNLTSIPTEALSH), 209–230 (GLIVLRLRHLNINAIRDYSFKR), 257–278 (NLTSLSITHCNLTSIPYVSVRH), 281–302 (YLRFLNLSYNPIVTIEGSMLHD), 305–326 (RLQEIQLVGGQLTTVEPFAFRG), and 329–350 (YLRILNVSGNLLTTLEESAFHS). N137 carries N-linked (GlcNAc...) asparagine glycosylation. The N-linked (GlcNAc...) asparagine glycan is linked to N195. Residues N257, N267, and N286 are each glycosylated (N-linked (GlcNAc...) asparagine). A glycan (N-linked (GlcNAc...) asparagine) is linked at N334. In terms of domain architecture, LRRCT spans 362–416 (NPLACDCRLLWVFRRRWRLNFNKQQPTCSTPEFVQGKEFKDFPDVLLPNYFTCRR). Intrachain disulfides connect C366/C389, C368/C414, and C439/C490. An Ig-like C2-type domain is found at 404–508 (PDVLLPNYFT…DTMLAHLHVR (105 aa)). N-linked (GlcNAc...) asparagine glycans are attached at residues N485, N498, N519, N530, and N535. A helical transmembrane segment spans residues 555-575 (TMGFISFLGVVLFCLVLLFLW). At 576 to 613 (SRGKGNTKHNIEIEYVPRKSDAGISSADAPRKFNMKMI) the chain is on the cytoplasmic side.

As to quaternary structure, homotetramer. Forms ternary complex with RTN4R/NGFR and RTN4R/TNFRSF19. In terms of processing, N-glycosylated. Contains predominantly high-mannose glycans.

It localises to the cell membrane. In terms of biological role, functional component of the Nogo receptor signaling complex (RTN4R/NGFR) in RhoA activation responsible for some inhibition of axonal regeneration by myelin-associated factors. Is also an important negative regulator of oligodentrocyte differentiation and axonal myelination. The sequence is that of Leucine-rich repeat and immunoglobulin-like domain-containing nogo receptor-interacting protein 1 (LINGO1) from Gallus gallus (Chicken).